Consider the following 505-residue polypeptide: MSLATLDSMGGASTGSVTVTEQLNFWAGRRVGGRNSEHAEPVFEPATGRVLCQMVPCGAEEVDEAIMSAHAAYVQWSKKSGTERARVMLEAARIIRERREKIAKLEVINNGKSITEALVDIDVAWQCIEYYAGVAGTLAGQHFQLPGGAFAYTRREPLGVCVGIGAWNYPFQIAACKSAPALACGNAMVFKPSPFTPVTAVILAEIYKEAGVPDGLFCVVQGGAETGSLLCNHPKVAKVSFTGSVPTGKKVMEMSAKGVKQVTLELGGKSPLIIFKDCDLENAVKGALMANFLTQGQVCCNGTRVFVHKDILPQFLEEVVKRTKAIAVGDPLLDSTRMGALITKPHLEKVLGFVRQAKKEGGRVLCGGEPFVPSDPKLKGGYFMSPCILDNCRDDMTCVKEEIFGPVMSVLPFDTEEEVIRRANNTTFGLASGVFTRDISRAHRVAASLEAGTCFINNYNISPVEVPFGGYKMSGFGRENGQVTIEYYSQLKTVVVETGDVENYF.

Residues Lys-191 and 243 to 247 (GSVPT) contribute to the NAD(+) site. Glu-265 serves as the catalytic Proton acceptor. The Nucleophile role is filled by Cys-299. Residue Glu-402 participates in NAD(+) binding.

It belongs to the aldehyde dehydrogenase family. In terms of assembly, homotetramer. Constitutively expressed in all organs tested: brain, eye, gill, GI, heart, liver, kidney, muscle, skin, testis and ovary.

It is found in the cytoplasm. The protein resides in the cytosol. It catalyses the reaction 4-(trimethylamino)butanal + NAD(+) + H2O = 4-(trimethylamino)butanoate + NADH + 2 H(+). It carries out the reaction an aldehyde + NAD(+) + H2O = a carboxylate + NADH + 2 H(+). The protein operates within amine and polyamine biosynthesis; carnitine biosynthesis. Its function is as follows. Converts gamma-trimethylaminobutyraldehyde into gamma-butyrobetaine with high efficiency (in vitro). Can catalyze the irreversible oxidation of a broad range of aldehydes to the corresponding acids in an NAD-dependent reaction, but with low efficiency. The protein is 4-trimethylaminobutyraldehyde dehydrogenase (aldh9A1) of Oryzias latipes (Japanese rice fish).